The following is a 418-amino-acid chain: Glutamyl-tRNA reductase (418 aa).

Residues 49 to 52 (TCNR), serine 109, 114 to 116 (EPQ), and glutamine 120 contribute to the substrate site. Catalysis depends on cysteine 50, which acts as the Nucleophile. 189 to 194 (GAGETI) provides a ligand contact to NADP(+).

It belongs to the glutamyl-tRNA reductase family. Homodimer.

The enzyme catalyses (S)-4-amino-5-oxopentanoate + tRNA(Glu) + NADP(+) = L-glutamyl-tRNA(Glu) + NADPH + H(+). It participates in porphyrin-containing compound metabolism; protoporphyrin-IX biosynthesis; 5-aminolevulinate from L-glutamyl-tRNA(Glu): step 1/2. Catalyzes the NADPH-dependent reduction of glutamyl-tRNA(Glu) to glutamate 1-semialdehyde (GSA). In Escherichia coli O9:H4 (strain HS), this protein is Glutamyl-tRNA reductase.